The following is an 818-amino-acid chain: MAIDNGKLQEEEASSVTRFYNIILGWDYKQLTKENERKNRKDSKEKLNVVKNTYKDVDDYFETFEPLLFEEVKAQILQNKDGEEASVCKMRLVMECNEGEGFHFLLVTYEHEEDEYLAQNDLLLLSKEEVKGNSFPSSYGFAVVEHRQNNLLRLRMYLAEDIVQITKNTKSSRTKSFIQALSNMRSLITSSASPIDKRVFSLKLCGLSTIIREYIALRSVSSLPFKDLIFTAAEKSCGFGDEAWKISGPLNEFFNENLNKSQKEAIDVGLSRKSFVLIQGPPGTGKTQTILSILGAIMHATPARVQSKGTDHEVKRGIQMTIQEKYNHWGRASPWILGVNPRDAIMPEDGDDGFFPTSGNELKPEVVNASRKYRLRVLVCAPSNSALDEIVLRLLSSGLRDENAQTYTPKIVRIGLKAHHSVASVSLDHLVAQKRGSAIDKPKQGTTGTDIDSIRTAILEEAAIVFATLSFSGSALLAKSNRGFDVVIIDEAAQAVEPATLIPLATRCKQVFLVGDPKQLPATVISTVAQDSGYGTSMFERLQKAGYPVKMLKTQYRMHPEIRSFPSKQFYEGALEDGSDIEAQTTRDWHKYRCFGPFCFFDIHEGKESQHPGATGSRVNLDEVEFVLLIYHRLVTMYPELKSSSQLAIISPYNYQVKTFKDRFKEMFGTEAEKVVDINTVDGFQGREKDVAIFSCVRANENGQIGFLSNSRRMNVGITRAKSSVLVVGSAATLKSDPLWKNLIESAEQRNRLFKVSKPLNNFFSEENLETMKLTEDMEIPDAPLYEDESLPVAPYGGDDDFGDGDADQDDVAMAGED.

Residues 259-559 (NKSQKEAIDV…KMLKTQYRMH (301 aa)) enclose the UvrD-like helicase ATP-binding domain. 280–287 (GPPGTGKT) contributes to the ATP binding site. 2 stretches are compositionally biased toward acidic residues: residues 781 to 790 (PDAPLYEDES) and 798 to 818 (GDDD…AGED). Residues 781–818 (PDAPLYEDESLPVAPYGGDDDFGDGDADQDDVAMAGED) are disordered.

Belongs to the helicase family. In terms of tissue distribution, expressed in flowers, siliques, leaves, roots and shoot apex.

Its subcellular location is the nucleus. Its function is as follows. Probable helicase that may regulate RNA molecules involved in nucleolar organization and pollen tube guidance. The protein is Probable helicase MAGATAMA 3 (MAA3) of Arabidopsis thaliana (Mouse-ear cress).